The primary structure comprises 255 residues: Tail completion protein p143 (255 aa).

Its subcellular location is the virion. Its function is as follows. Putative role in tail stability. This is Tail completion protein p143 from Escherichia phage T5 (Enterobacteria phage T5).